Here is a 177-residue protein sequence, read N- to C-terminus: Bifunctional protein PyrR (177 aa).

The PRPP-binding motif lies at 99–111 (VVLVDDVLFTGRT).

This sequence belongs to the purine/pyrimidine phosphoribosyltransferase family. PyrR subfamily.

The catalysed reaction is UMP + diphosphate = 5-phospho-alpha-D-ribose 1-diphosphate + uracil. In terms of biological role, regulates the transcription of the pyrimidine nucleotide (pyr) operon in response to exogenous pyrimidines. Also displays a weak uracil phosphoribosyltransferase activity which is not physiologically significant. In Geobacter sp. (strain M21), this protein is Bifunctional protein PyrR.